The sequence spans 879 residues: Alanine--tRNA ligase (879 aa).

Zn(2+) contacts are provided by H566, H570, C668, and H672.

Belongs to the class-II aminoacyl-tRNA synthetase family. Requires Zn(2+) as cofactor.

The protein resides in the cytoplasm. The enzyme catalyses tRNA(Ala) + L-alanine + ATP = L-alanyl-tRNA(Ala) + AMP + diphosphate. Its function is as follows. Catalyzes the attachment of alanine to tRNA(Ala) in a two-step reaction: alanine is first activated by ATP to form Ala-AMP and then transferred to the acceptor end of tRNA(Ala). Also edits incorrectly charged Ser-tRNA(Ala) and Gly-tRNA(Ala) via its editing domain. The sequence is that of Alanine--tRNA ligase from Oceanobacillus iheyensis (strain DSM 14371 / CIP 107618 / JCM 11309 / KCTC 3954 / HTE831).